The chain runs to 369 residues: 4-hydroxy-3-methylbut-2-en-1-yl diphosphate synthase (flavodoxin) (369 aa).

4 residues coordinate [4Fe-4S] cluster: Cys270, Cys273, Cys305, and Glu312.

It belongs to the IspG family. [4Fe-4S] cluster is required as a cofactor.

The catalysed reaction is (2E)-4-hydroxy-3-methylbut-2-enyl diphosphate + oxidized [flavodoxin] + H2O + 2 H(+) = 2-C-methyl-D-erythritol 2,4-cyclic diphosphate + reduced [flavodoxin]. Its pathway is isoprenoid biosynthesis; isopentenyl diphosphate biosynthesis via DXP pathway; isopentenyl diphosphate from 1-deoxy-D-xylulose 5-phosphate: step 5/6. Converts 2C-methyl-D-erythritol 2,4-cyclodiphosphate (ME-2,4cPP) into 1-hydroxy-2-methyl-2-(E)-butenyl 4-diphosphate. The sequence is that of 4-hydroxy-3-methylbut-2-en-1-yl diphosphate synthase (flavodoxin) from Pseudomonas fluorescens (strain Pf0-1).